Here is a 413-residue protein sequence, read N- to C-terminus: Tryptophan synthase beta chain (413 aa).

Lys107 carries the post-translational modification N6-(pyridoxal phosphate)lysine.

The protein belongs to the TrpB family. In terms of assembly, tetramer of two alpha and two beta chains. Pyridoxal 5'-phosphate is required as a cofactor.

It carries out the reaction (1S,2R)-1-C-(indol-3-yl)glycerol 3-phosphate + L-serine = D-glyceraldehyde 3-phosphate + L-tryptophan + H2O. Its pathway is amino-acid biosynthesis; L-tryptophan biosynthesis; L-tryptophan from chorismate: step 5/5. The beta subunit is responsible for the synthesis of L-tryptophan from indole and L-serine. This Trichormus variabilis (strain ATCC 29413 / PCC 7937) (Anabaena variabilis) protein is Tryptophan synthase beta chain.